The primary structure comprises 427 residues: Serine--tRNA ligase (427 aa).

Residue 231–233 (TAE) participates in L-serine binding. 262–264 (RSE) serves as a coordination point for ATP. Position 285 (glutamate 285) interacts with L-serine. 349–352 (EISS) is an ATP binding site. Serine 385 is an L-serine binding site.

The protein belongs to the class-II aminoacyl-tRNA synthetase family. Type-1 seryl-tRNA synthetase subfamily. In terms of assembly, homodimer. The tRNA molecule binds across the dimer.

The protein localises to the cytoplasm. It carries out the reaction tRNA(Ser) + L-serine + ATP = L-seryl-tRNA(Ser) + AMP + diphosphate + H(+). The catalysed reaction is tRNA(Sec) + L-serine + ATP = L-seryl-tRNA(Sec) + AMP + diphosphate + H(+). Its pathway is aminoacyl-tRNA biosynthesis; selenocysteinyl-tRNA(Sec) biosynthesis; L-seryl-tRNA(Sec) from L-serine and tRNA(Sec): step 1/1. In terms of biological role, catalyzes the attachment of serine to tRNA(Ser). Is also able to aminoacylate tRNA(Sec) with serine, to form the misacylated tRNA L-seryl-tRNA(Sec), which will be further converted into selenocysteinyl-tRNA(Sec). The polypeptide is Serine--tRNA ligase (Listeria welshimeri serovar 6b (strain ATCC 35897 / DSM 20650 / CCUG 15529 / CIP 8149 / NCTC 11857 / SLCC 5334 / V8)).